The following is a 536-amino-acid chain: MEMFGVHNPAIELATVGLGGAASVRYNFSAAALYEEAIRRGEAELTAQGALRAITGQHTGRSPRDKFVVRDINTDGEIWWDNNKPISPEHFAVLRDDMLAHAAGKELFVQDLVGGAEEGHALPTRVVTEFAWHSLFIRNLLIRPDTAALSSFVPKLTIIDLPSFKADPARHGCRSETVIACDLTNGLVLIGGTSYAGEMKKSVFTVLNYLLPAKGVMPMHCSANVGPDGDAAVFFGLSGTGKTTLSADPARTLIGDDEHGWSENGIFNFEGGCYAKTIRLSAEAEPEIYATTQRFGTVLENVVLNESREPDFNDGSLTENTRCAYPMDFIPNASKTGRAGHPKTIIMLTADAFGVMPPIARLTPDQAMYHFLSGYTAKVAGTEKGVVEPEATFSTCFGAPFMPRHPAEYGNLLKELIGRHGVQCWLVNTGWTGGAYGTGKRMPIKATRALLAAALSGELGQVEFRADTNFGFAVPVSVHGVDGSILDPRSTWADKAAYDAQAEKLVSMFIANFAKFENHVDGGVRDAAPGVKVAAE.

Substrate is bound by residues Arg-61, Tyr-195, and Lys-201. ATP is bound by residues Lys-201, His-220, and 236-244 (GLSGTGKTT). Positions 201 and 220 each coordinate Mn(2+). Residue Asp-257 coordinates Mn(2+). Positions 285, 322, and 447 each coordinate ATP. Arg-322 serves as a coordination point for substrate.

This sequence belongs to the phosphoenolpyruvate carboxykinase (ATP) family. Mn(2+) is required as a cofactor.

It is found in the cytoplasm. It catalyses the reaction oxaloacetate + ATP = phosphoenolpyruvate + ADP + CO2. It functions in the pathway carbohydrate biosynthesis; gluconeogenesis. Its function is as follows. Involved in the gluconeogenesis. Catalyzes the conversion of oxaloacetate (OAA) to phosphoenolpyruvate (PEP) through direct phosphoryl transfer between the nucleoside triphosphate and OAA. This is Phosphoenolpyruvate carboxykinase (ATP) from Rhizobium johnstonii (strain DSM 114642 / LMG 32736 / 3841) (Rhizobium leguminosarum bv. viciae).